Consider the following 816-residue polypeptide: Phosphatidylinositol 4-kinase beta (816 aa).

3 disordered regions span residues 1-28 (MGDT…NGGS), 93-120 (PPTG…RRRR), and 249-318 (HRKR…SFSS). Gly-2 bears the N-acetylglycine mark. Residues 2–68 (GDTVVAPAPL…VKLSHGGVAS (67 aa)) form an interaction with ACBD3 region. The region spanning 49-242 (QKACQEVLQK…GTKLRRLILS (194 aa)) is the PIK helical domain. Phosphoserine is present on Ser-258. Thr-263 carries the phosphothreonine modification. 7 positions are modified to phosphoserine: Ser-266, Ser-275, Ser-277, Ser-284, Ser-294, Ser-428, and Ser-511. Positions 278–294 (DATASISLSSSLKRTAS) are enriched in low complexity. A phosphothreonine mark is found at Thr-517 and Thr-519. One can recognise a PI3K/PI4K catalytic domain in the interval 535 to 801 (EPWQEKVRRI…MVDGSMRSIT (267 aa)). The G-loop stretch occupies residues 541 to 547 (VRRIREG). Positions 668-676 (QVKDRHNGN) are catalytic loop. Residues 687–711 (HIDFGFILSSSPRNLGFETSAFKLT) form an activation loop region.

Belongs to the PI3/PI4-kinase family. Type III PI4K subfamily. As to quaternary structure, interacts with ARF1 and ARF3 in the Golgi complex, but not with ARF4, ARF5 or ARF6. Interacts with NCS1/FREQ in a calcium-independent manner. Interacts with CALN1/CABP8 and CALN2/CABP7; in a calcium-dependent manner; this interaction competes with NCS1/FREQ binding. Interacts with ACBD3. Interacts with ARMH3, YWHAB, YWHAE, YWHAG, YWHAH, YWHAQ, YWHAZ and SFN. Interacts with GGA2 (via VHS domain); the interaction is important for PI4KB location at the Golgi apparatus membrane. Interacts with ATG9A. Requires Mg(2+) as cofactor. The cofactor is Mn(2+).

The protein localises to the endomembrane system. Its subcellular location is the mitochondrion outer membrane. It is found in the rough endoplasmic reticulum membrane. The protein resides in the golgi apparatus. It localises to the golgi apparatus membrane. It catalyses the reaction a 1,2-diacyl-sn-glycero-3-phospho-(1D-myo-inositol) + ATP = a 1,2-diacyl-sn-glycero-3-phospho-(1D-myo-inositol 4-phosphate) + ADP + H(+). Inhibited by wortmannin. Increased kinase activity upon interaction with NCS1/FREQ. Functionally, phosphorylates phosphatidylinositol (PI) in the first committed step in the production of the second messenger inositol-1,4,5,-trisphosphate (PIP). May regulate Golgi disintegration/reorganization during mitosis, possibly via its phosphorylation. Involved in Golgi-to-plasma membrane trafficking. May play an important role in the inner ear development. The sequence is that of Phosphatidylinositol 4-kinase beta (PI4KB) from Rhinolophus ferrumequinum (Greater horseshoe bat).